The chain runs to 1043 residues: Probable inorganic carbon transporter subunit DabA (1043 aa).

4 residues coordinate Zn(2+): Cys460, Asp462, His719, and Cys734.

The protein belongs to the inorganic carbon transporter (TC 9.A.2) DabA family. As to quaternary structure, forms a complex with DabB. Requires Zn(2+) as cofactor.

The protein resides in the cell inner membrane. Part of an energy-coupled inorganic carbon pump. The polypeptide is Probable inorganic carbon transporter subunit DabA (Thiobacillus denitrificans (strain ATCC 25259 / T1)).